We begin with the raw amino-acid sequence, 224 residues long: uncharacterized protein (224 aa).

4 helical membrane passes run 39-59 (LICL…FYSI), 70-90 (YLSL…ILFA), 103-123 (VFVF…IGAI), and 139-159 (MHIG…FLIT).

It localises to the membrane. This is an uncharacterized protein from Dictyostelium discoideum (Social amoeba).